The primary structure comprises 119 residues: Fluoride-specific ion channel FluC (119 aa).

4 helical membrane passes run 5-25 (ILPL…LNLA), 30-50 (LSPA…IGIF), 59-79 (WKLL…GFSL), and 92-112 (SALA…WLGL). Residues Gly69 and Thr72 each contribute to the Na(+) site.

This sequence belongs to the fluoride channel Fluc/FEX (TC 1.A.43) family.

It localises to the cell inner membrane. The enzyme catalyses fluoride(in) = fluoride(out). With respect to regulation, na(+) is not transported, but it plays an essential structural role and its presence is essential for fluoride channel function. Fluoride-specific ion channel. Important for reducing fluoride concentration in the cell, thus reducing its toxicity. The polypeptide is Fluoride-specific ion channel FluC (Neisseria gonorrhoeae (strain NCCP11945)).